The sequence spans 264 residues: MPELPEVETVVRSLAPLVGRRIATAEFRNLRILRGGDPDLMSARLAGRKILSIKRYGKFIVAVIEGGGHLMIHLGMTGKLLLGGPSGKHTHAVLTFDRGTLLFDDSRQFGCIEYSEEFPKRVARLGPEPMEISFEDFAADLKRRKTRIKSLLLNQTFIRGVGNIYADEALFRAGIHPQALTSRIRIERARKLYDAIGEVLTEAIEAGGSSISDYVDAEGRSGFFQFSHRVYQRTGEPCLNCKTPIRRVIVTQRSSHFCPHCQKR.

P2 functions as the Schiff-base intermediate with DNA in the catalytic mechanism. E3 serves as the catalytic Proton donor. The active-site Proton donor; for beta-elimination activity is the K58. Positions 89, 107, and 144 each coordinate DNA. An FPG-type zinc finger spans residues 229–263 (RVYQRTGEPCLNCKTPIRRVIVTQRSSHFCPHCQK). Residue R253 is the Proton donor; for delta-elimination activity of the active site.

Belongs to the FPG family. Monomer. It depends on Zn(2+) as a cofactor.

The enzyme catalyses Hydrolysis of DNA containing ring-opened 7-methylguanine residues, releasing 2,6-diamino-4-hydroxy-5-(N-methyl)formamidopyrimidine.. It carries out the reaction 2'-deoxyribonucleotide-(2'-deoxyribose 5'-phosphate)-2'-deoxyribonucleotide-DNA = a 3'-end 2'-deoxyribonucleotide-(2,3-dehydro-2,3-deoxyribose 5'-phosphate)-DNA + a 5'-end 5'-phospho-2'-deoxyribonucleoside-DNA + H(+). In terms of biological role, involved in base excision repair of DNA damaged by oxidation or by mutagenic agents. Acts as a DNA glycosylase that recognizes and removes damaged bases. Has a preference for oxidized purines, such as 7,8-dihydro-8-oxoguanine (8-oxoG). Has AP (apurinic/apyrimidinic) lyase activity and introduces nicks in the DNA strand. Cleaves the DNA backbone by beta-delta elimination to generate a single-strand break at the site of the removed base with both 3'- and 5'-phosphates. In Solibacter usitatus (strain Ellin6076), this protein is Formamidopyrimidine-DNA glycosylase.